A 464-amino-acid chain; its full sequence is Sensor histidine kinase Hik34 (464 aa).

The region spanning 235-449 (ALTHEVRTPL…ILTIYLKCEQ (215 aa)) is the Histidine kinase domain. Position 238 is a phosphohistidine; by autocatalysis (H238).

In terms of processing, when expressed in E.coli autophosphorylates at 18 to 30 degrees Celsius; less phosphorylation occurs at 36 and none occurs at 42 or 48 degrees Celsius.

The enzyme catalyses ATP + protein L-histidine = ADP + protein N-phospho-L-histidine.. Its function is as follows. Member of a two-component system Hik34/Rre1, controlling expression of at least 20 genes in response to hyperosmotic stress (0.5 M sorbitol) or salt (0.5 M NaCl). Represses expression of heat shock genes under normal growth conditions. Required for survival of long-term heat shock exposure. In Synechocystis sp. (strain ATCC 27184 / PCC 6803 / Kazusa), this protein is Sensor histidine kinase Hik34.